Consider the following 123-residue polypeptide: Small ribosomal subunit protein uS13 (123 aa).

The segment at 95–123 is disordered; sequence GLPVRGQRTKTNARTRKGPIKTVGAKRKK.

Belongs to the universal ribosomal protein uS13 family. In terms of assembly, part of the 30S ribosomal subunit. Forms a loose heterodimer with protein S19. Forms two bridges to the 50S subunit in the 70S ribosome.

Its function is as follows. Located at the top of the head of the 30S subunit, it contacts several helices of the 16S rRNA. In the 70S ribosome it contacts the 23S rRNA (bridge B1a) and protein L5 of the 50S subunit (bridge B1b), connecting the 2 subunits; these bridges are implicated in subunit movement. Contacts the tRNAs in the A and P-sites. In Desulfitobacterium hafniense (strain DSM 10664 / DCB-2), this protein is Small ribosomal subunit protein uS13.